A 162-amino-acid polypeptide reads, in one-letter code: 2-C-methyl-D-erythritol 2,4-cyclodiphosphate synthase (162 aa).

Residues D12 and H14 each contribute to the a divalent metal cation site. 4-CDP-2-C-methyl-D-erythritol 2-phosphate is bound by residues 12-14 (DVH) and 38-39 (HS). H46 is an a divalent metal cation binding site. 4-CDP-2-C-methyl-D-erythritol 2-phosphate is bound by residues 60–62 (DIG), 136–139 (TTTE), F143, and R146.

This sequence belongs to the IspF family. As to quaternary structure, homotrimer. A divalent metal cation is required as a cofactor.

It catalyses the reaction 4-CDP-2-C-methyl-D-erythritol 2-phosphate = 2-C-methyl-D-erythritol 2,4-cyclic diphosphate + CMP. It functions in the pathway isoprenoid biosynthesis; isopentenyl diphosphate biosynthesis via DXP pathway; isopentenyl diphosphate from 1-deoxy-D-xylulose 5-phosphate: step 4/6. Functionally, involved in the biosynthesis of isopentenyl diphosphate (IPP) and dimethylallyl diphosphate (DMAPP), two major building blocks of isoprenoid compounds. Catalyzes the conversion of 4-diphosphocytidyl-2-C-methyl-D-erythritol 2-phosphate (CDP-ME2P) to 2-C-methyl-D-erythritol 2,4-cyclodiphosphate (ME-CPP) with a corresponding release of cytidine 5-monophosphate (CMP). The polypeptide is 2-C-methyl-D-erythritol 2,4-cyclodiphosphate synthase (Porphyromonas gingivalis (strain ATCC BAA-308 / W83)).